The sequence spans 26 residues: Guentherin (26 aa).

Expressed by the skin glands.

The protein localises to the secreted. Antimicrobial peptide. Active against the Gram-positive bacteria S.aureus FDA209P (MIC=35.5 ug/ml) and B.subtilis ATCC 6633 (MIC&gt;64 ug/ml), but not active against the Gram-negative bacterium E.coli or the fungus C.albicans. This Sylvirana guentheri (Gunther's frog) protein is Guentherin.